A 208-amino-acid chain; its full sequence is dITP/XTP pyrophosphatase (208 aa).

Substrate is bound at residue 7 to 12 (SNNAKK). 2 residues coordinate Mg(2+): Glu-39 and Asp-68. Residue Asp-68 is the Proton acceptor of the active site. Residues Ser-69, 162–165 (FGYD), Lys-185, and 190–191 (HR) each bind substrate.

This sequence belongs to the HAM1 NTPase family. As to quaternary structure, homodimer. The cofactor is Mg(2+).

It catalyses the reaction XTP + H2O = XMP + diphosphate + H(+). The catalysed reaction is dITP + H2O = dIMP + diphosphate + H(+). It carries out the reaction ITP + H2O = IMP + diphosphate + H(+). In terms of biological role, pyrophosphatase that catalyzes the hydrolysis of nucleoside triphosphates to their monophosphate derivatives, with a high preference for the non-canonical purine nucleotides XTP (xanthosine triphosphate), dITP (deoxyinosine triphosphate) and ITP. Seems to function as a house-cleaning enzyme that removes non-canonical purine nucleotides from the nucleotide pool, thus preventing their incorporation into DNA/RNA and avoiding chromosomal lesions. The polypeptide is dITP/XTP pyrophosphatase (Methylibium petroleiphilum (strain ATCC BAA-1232 / LMG 22953 / PM1)).